The primary structure comprises 216 residues: Urease accessory protein UreG (216 aa).

GTP is bound at residue 25 to 32 (GPVGSGKT).

This sequence belongs to the SIMIBI class G3E GTPase family. UreG subfamily. In terms of assembly, homodimer. UreD, UreF and UreG form a complex that acts as a GTP-hydrolysis-dependent molecular chaperone, activating the urease apoprotein by helping to assemble the nickel containing metallocenter of UreC. The UreE protein probably delivers the nickel.

Its subcellular location is the cytoplasm. Facilitates the functional incorporation of the urease nickel metallocenter. This process requires GTP hydrolysis, probably effectuated by UreG. In Burkholderia thailandensis (strain ATCC 700388 / DSM 13276 / CCUG 48851 / CIP 106301 / E264), this protein is Urease accessory protein UreG.